Consider the following 157-residue polypeptide: Urease accessory protein UreE (157 aa).

Belongs to the UreE family.

It is found in the cytoplasm. In terms of biological role, involved in urease metallocenter assembly. Binds nickel. Probably functions as a nickel donor during metallocenter assembly. In Paenarthrobacter aurescens (strain TC1), this protein is Urease accessory protein UreE.